The chain runs to 1355 residues: DNA-directed RNA polymerase subunit beta' (1355 aa).

Positions 219, 293, 300, and 303 each coordinate Zn(2+). The interval 1331 to 1355 (AEVEVDDEVDDDYEDDDEDDDDYED) is disordered.

Belongs to the RNA polymerase beta' chain family. RpoC2 subfamily. As to quaternary structure, in cyanobacteria the RNAP catalytic core is composed of 2 alpha, 1 beta, 1 beta', 1 gamma and 1 omega subunit. When a sigma factor is associated with the core the holoenzyme is formed, which can initiate transcription. The cofactor is Zn(2+).

The catalysed reaction is RNA(n) + a ribonucleoside 5'-triphosphate = RNA(n+1) + diphosphate. Its function is as follows. DNA-dependent RNA polymerase catalyzes the transcription of DNA into RNA using the four ribonucleoside triphosphates as substrates. This chain is DNA-directed RNA polymerase subunit beta', found in Nostoc sp. (strain PCC 7120 / SAG 25.82 / UTEX 2576).